A 315-amino-acid chain; its full sequence is Isoaspartyl peptidase/L-asparaginase 1 (315 aa).

S169 bears the Phosphoserine mark. Residue T183 is the Nucleophile of the active site. Residues 211–214 (RIGD) and 233–236 (TGKG) each bind substrate.

It belongs to the Ntn-hydrolase family. In terms of assembly, heterotetramer of two alpha and two beta chains arranged as a dimer of alpha/beta heterodimers. Post-translationally, cleaved into an alpha and beta chain by autocatalysis; this activates the enzyme. The N-terminal residue of the beta subunit is responsible for the nucleophile hydrolase activity.

It catalyses the reaction Cleavage of a beta-linked Asp residue from the N-terminus of a polypeptide.. Functionally, acts in asparagine catabolism but also in the final steps of protein and degradation via hydrolysis of a range of isoaspartyl dipeptides. The affinity for Asn and at least 4 isoaspartyl dipeptides (L-beta-Asp-Ala, L-beta-Asp-Gly, L-beta-Asp-Leu, L-beta-Asp-Phe) is quite low, KM being greater than 4.0 mM. The enzyme is inactive on alpha-aspartyl dipeptides. This Arabidopsis thaliana (Mouse-ear cress) protein is Isoaspartyl peptidase/L-asparaginase 1.